The chain runs to 89 residues: uncharacterized protein (89 aa).

3 helical membrane-spanning segments follow: residues 5-25, 36-56, and 67-87; these read AYLV…KRKA, RLWL…MQTF, and YGVP…YSPF.

The protein resides in the cell membrane. This is an uncharacterized protein from Bacillus subtilis (strain 168).